Reading from the N-terminus, the 258-residue chain is Small ribosomal subunit protein uS2 (258 aa).

A disordered region spans residues 226-258; that stretch reads KQGQDDEETLEVDFKENADGSEEIVSAEENPED. Acidic residues predominate over residues 244–258; that stretch reads DGSEEIVSAEENPED.

Belongs to the universal ribosomal protein uS2 family.

This is Small ribosomal subunit protein uS2 from Lactobacillus acidophilus (strain ATCC 700396 / NCK56 / N2 / NCFM).